The following is a 119-amino-acid chain: Large ribosomal subunit protein uL22c (119 aa).

It belongs to the universal ribosomal protein uL22 family. In terms of assembly, part of the 50S ribosomal subunit.

It is found in the plastid. Its subcellular location is the chloroplast. Its function is as follows. This protein binds specifically to 23S rRNA. In terms of biological role, the globular domain of the protein is located near the polypeptide exit tunnel on the outside of the subunit, while an extended beta-hairpin is found that lines the wall of the exit tunnel in the center of the 70S ribosome. This chain is Large ribosomal subunit protein uL22c (rpl22), found in Chaetosphaeridium globosum (Charophycean green alga).